Reading from the N-terminus, the 479-residue chain is Phosphatidylinositol 4-kinase type 2-alpha (479 aa).

The residue at position 1 (M1) is an N-acetylmethionine. Positions 1–74 (MDETSPLVSP…ARGAAAQGQT (74 aa)) are disordered. Phosphoserine is present on residues S5, S9, S44, S47, and S51. Over residues 31-45 (VPGGAVRVAAAAGSG) the composition is skewed to low complexity. The span at 53 to 66 (GHDRERQPLLDRAR) shows a compositional bias: basic and acidic residues. A PI3K/PI4K catalytic domain is found at 124–453 (CIFPERIYQG…VQMPPVIVET (330 aa)). Positions 130 to 136 (IYQGSSG) are G-loop. ATP is bound by residues 131-137 (YQGSSGS) and K152. The important for substrate binding stretch occupies residues 157–159 (EPY). The tract at residues 165–178 (KWTKWLQKLCCPCC) is important for interaction with membranes. Residues C174, C175, C177, and C178 are each lipidated (S-palmitoyl cysteine). Residue 261–264 (QLFV) participates in ATP binding. The important for interaction with membranes stretch occupies residues 268–276 (KDADYWLRR). The tract at residues 305-313 (RNTDRGNDN) is catalytic loop. The activation loop stretch occupies residues 344 to 364 (AIDNGLAFPLKHPDSWRAYPF). Residue D346 coordinates ATP. Residues 359–368 (WRAYPFYWAW) form an important for interaction with membranes region. At S462 the chain carries Phosphoserine.

Belongs to the PI3/PI4-kinase family. Type II PI4K subfamily. As to quaternary structure, associates with the BLOC-1 and the AP-3 complexes; the BLOC-1 complex is required for optimal binding of PI4K2A to the AP-3 complex. Interacts with BLOC1S5 and DTNBP1. Interacts with FOS; this interaction may enhance phosphatidylinositol phosphorylation activity. Interacts with ITCH. Interacts with ATG9A. In terms of processing, palmitoylated by ZDHHC3 and ZDHHC7 in the CCPCC motif. Palmitoylation is cholesterol-dependent, and required for TGN localization. Post-translationally, ubiquitinated by ITCH; this does not lead to proteasomal degradation. Widely expressed. Highest expression is observed in kidney, brain, heart, skeletal muscle, and placenta and lowest expression is observed in colon, thymus, and small intestine.

The protein localises to the golgi apparatus. Its subcellular location is the trans-Golgi network membrane. It is found in the membrane raft. It localises to the cell projection. The protein resides in the dendrite. The protein localises to the presynaptic cell membrane. Its subcellular location is the synapse. It is found in the synaptosome. It localises to the mitochondrion. The protein resides in the endosome. The protein localises to the endosome membrane. Its subcellular location is the cytoplasmic vesicle. It is found in the membrane. It localises to the cell membrane. The protein resides in the perikaryon. The protein localises to the neuron projection. It carries out the reaction a 1,2-diacyl-sn-glycero-3-phospho-(1D-myo-inositol) + ATP = a 1,2-diacyl-sn-glycero-3-phospho-(1D-myo-inositol 4-phosphate) + ADP + H(+). Its function is as follows. Membrane-bound phosphatidylinositol-4 kinase (PI4-kinase) that catalyzes the phosphorylation of phosphatidylinositol (PI) to phosphatidylinositol 4-phosphate (PI4P), a lipid that plays important roles in endocytosis, Golgi function, protein sorting and membrane trafficking and is required for prolonged survival of neurons. Besides, phosphorylation of phosphatidylinositol (PI) to phosphatidylinositol 4-phosphate (PI4P) is the first committed step in the generation of phosphatidylinositol 4,5-bisphosphate (PIP2), a precursor of the second messenger inositol 1,4,5-trisphosphate (InsP3). This chain is Phosphatidylinositol 4-kinase type 2-alpha (PI4K2A), found in Homo sapiens (Human).